Reading from the N-terminus, the 602-residue chain is Glutamate-rich protein 6 (602 aa).

The tract at residues 22-67 (LRPRLTSVSSPSLSSTPPPSPLSSPSWSEEELPAPRSDGSPASSIS) is disordered. Positions 25–36 (RLTSVSSPSLSS) are enriched in low complexity.

This sequence belongs to the ERICH6 family.

It localises to the nucleus. This chain is Glutamate-rich protein 6 (Erich6), found in Rattus norvegicus (Rat).